The primary structure comprises 467 residues: Mitochondrial distribution and morphology protein 10 (467 aa).

Positions 361-393 (GLPDTAPSRNRECDDLPPPRRDNYHHQRSPHAS) are disordered. Over residues 369–385 (RNRECDDLPPPRRDNYH) the composition is skewed to basic and acidic residues.

The protein belongs to the MDM10 family. In terms of assembly, component of the ER-mitochondria encounter structure (ERMES) or MDM complex, composed of MMM1, MDM10, MDM12 and MDM34. Associates with the mitochondrial outer membrane sorting assembly machinery SAM(core) complex.

Its subcellular location is the mitochondrion outer membrane. In terms of biological role, component of the ERMES/MDM complex, which serves as a molecular tether to connect the endoplasmic reticulum and mitochondria. Components of this complex are involved in the control of mitochondrial shape and protein biogenesis and may function in phospholipid exchange. MDM10 is involved in the late assembly steps of the general translocase of the mitochondrial outer membrane (TOM complex). Functions in the TOM40-specific route of the assembly of outer membrane beta-barrel proteins, including the association of TOM40 with the receptor TOM22 and small TOM proteins. Can associate with the SAM(core) complex as well as the MDM12-MMM1 complex, both involved in late steps of the major beta-barrel assembly pathway, that is responsible for biogenesis of all outer membrane beta-barrel proteins. May act as a switch that shuttles between both complexes and channels precursor proteins into the TOM40-specific pathway. Plays a role in mitochondrial morphology and in the inheritance of mitochondria. The protein is Mitochondrial distribution and morphology protein 10 of Ajellomyces capsulatus (strain NAm1 / WU24) (Darling's disease fungus).